A 358-amino-acid chain; its full sequence is Homoserine O-acetyltransferase (358 aa).

The region spanning 41–343 (NAVLICHALT…DYGHDAFLVD (303 aa)) is the AB hydrolase-1 domain. Serine 143 functions as the Nucleophile in the catalytic mechanism. Substrate is bound at residue arginine 212. Active-site residues include aspartate 304 and histidine 337. Aspartate 338 lines the substrate pocket.

It belongs to the AB hydrolase superfamily. MetX family. In terms of assembly, homodimer.

Its subcellular location is the cytoplasm. It carries out the reaction L-homoserine + acetyl-CoA = O-acetyl-L-homoserine + CoA. It participates in amino-acid biosynthesis; L-methionine biosynthesis via de novo pathway; O-acetyl-L-homoserine from L-homoserine: step 1/1. Functionally, transfers an acetyl group from acetyl-CoA to L-homoserine, forming acetyl-L-homoserine. This is Homoserine O-acetyltransferase from Haemophilus influenzae (strain 86-028NP).